Consider the following 720-residue polypeptide: MPLRNLTETHNFSSTNLDTDGTGDDHDGAPLSSSPSFGQQNDNSTNDNAGLTNPFMGSDEESNARDGESLSSSVHYQPQGSDSSLLHDNSRLDLSQNKGVSDYKGYYSRNNSRAVSTANDNSFLQPPHRAIASSPSLNSNLSKNDILSPPEFDRYPLVGSRVTSMTQLNHHGRSPTSSPGNESSASFSSNPFLGEQDFSPFGGYPASSFPLMIDEKEEDDYLHNPDPEEEARLDRRRFIDDFKYMDKRSASGLAGVLLLFLAAIFIFIVLPALTFTGAIDHESNTEEVTYLTQYQYPQLSAIRTSLVDPDTPDTAKTREAMDGSKWELVFSDEFNAEGRTFYDGDDPYWTAPDVHYDATKDLEWYSPDASTTVNGTLQLRMDAFKNHGLYYRSGMLQSWNKVCFTQGALEISANLPNYGRVSGLWPGLWTMGNLGRPGYLASTQGVWPYSYESCDAGITPNQSSPDGISYLPGQKLSICTCDGEDHPNQGVGRGAPEIDVLEGETDTKIGVGIASQSLQIAPFDIWYMPDYDFIEVYNFTTTTMNTYAGGPFQQAVSAVSTLNVTWYEFGEYGGYFQKYAIEYLNDDDNGYIRWFVGDTPTYTIHAKALHPDGNIGWRRISKEPMSIILNLGISNNWAYIDWQYIFFPVVMSIDYVRIYQPSNAISVTCDPSDYPTYDYIQSHLNAFQNANLTTWEDAGYTFPKNILTGKCTSSKFKLSS.

Composition is skewed to polar residues over residues 1 to 17, 31 to 51, and 69 to 90; these read MPLR…STNL, LSSS…NAGL, and SLSS…HDNS. Residues 1–90 form a disordered region; it reads MPLRNLTETH…SDSSLLHDNS (90 aa). Topologically, residues 1–252 are cytoplasmic; that stretch reads MPLRNLTETH…KYMDKRSASG (252 aa). Residues S81, S116, S133, S134, S136, and S139 each carry the phosphoserine modification. 2 disordered regions span residues 117 to 142 and 167 to 189; these read TAND…SNLS and QLNH…SFSS. Residues 133–142 show a composition bias toward low complexity; the sequence is SSPSLNSNLS. Residues 253–273 form a helical; Signal-anchor for type II membrane protein membrane-spanning segment; the sequence is LAGVLLLFLAAIFIFIVLPAL. Topologically, residues 274 to 720 are lumenal; that stretch reads TFTGAIDHES…CTSSKFKLSS (447 aa). The GH16 domain occupies 289–664; that stretch reads TYLTQYQYPQ…YVRIYQPSNA (376 aa). N-linked (GlcNAc...) asparagine glycosylation is found at N374, N461, N538, N563, and N691.

The protein belongs to the SKN1/KRE6 family. As to quaternary structure, the cytoplasmic domain interacts with the actin patch assembly proteins LAS17 and SLA1. Interacts with KEG1.

The protein resides in the golgi apparatus membrane. Its function is as follows. Involved in the synthesis of (1-&gt;6)- and (1-&gt;3)-beta-D-glucan polymers of the yeast cell wall in vivo. It is required for full activity of beta-glucan synthase in vitro. May be involved in the maturation and transport of cell wall proteins (CWP) to the cell wall. May act as a transglucosidase and contribute to the construction of a protein-bound glucan-structure that acts as an acceptor site for the addition of (1-&gt;6)-beta-D-glucan at the cell surface. The polypeptide is Beta-glucan synthesis-associated protein KRE6 (KRE6) (Saccharomyces cerevisiae (strain ATCC 204508 / S288c) (Baker's yeast)).